Here is a 313-residue protein sequence, read N- to C-terminus: Pyrimidine-specific ribonucleoside hydrolase RihB (313 aa).

The active-site Proton acceptor is Asp-11. 3 residues coordinate Ca(2+): Asp-11, Asp-16, and Val-124. Gln-227 and His-239 together coordinate substrate. Residue Asp-240 participates in Ca(2+) binding.

It belongs to the IUNH family. RihB subfamily. Homotetramer. Requires Ca(2+) as cofactor.

It carries out the reaction a pyrimidine ribonucleoside + H2O = a pyrimidine nucleobase + D-ribose. Its function is as follows. Hydrolyzes cytidine or uridine to ribose and cytosine or uracil, respectively. Has a clear preference for cytidine over uridine. Strictly specific for ribonucleosides. The sequence is that of Pyrimidine-specific ribonucleoside hydrolase RihB from Escherichia coli O17:K52:H18 (strain UMN026 / ExPEC).